Consider the following 507-residue polypeptide: Ribose import ATP-binding protein RbsA 2 (507 aa).

ABC transporter domains are found at residues 7–245 and 249–498; these read FSLD…VGRN and LFTR…MPQS. Residue 39–46 coordinates ATP; it reads GENGAGKS.

It belongs to the ABC transporter superfamily. Ribose importer (TC 3.A.1.2.1) family. In terms of assembly, the complex is composed of an ATP-binding protein (RbsA), two transmembrane proteins (RbsC) and a solute-binding protein (RbsB).

It is found in the cell inner membrane. The catalysed reaction is D-ribose(out) + ATP + H2O = D-ribose(in) + ADP + phosphate + H(+). Part of the ABC transporter complex RbsABC involved in ribose import. Responsible for energy coupling to the transport system. This is Ribose import ATP-binding protein RbsA 2 from Mesorhizobium japonicum (strain LMG 29417 / CECT 9101 / MAFF 303099) (Mesorhizobium loti (strain MAFF 303099)).